We begin with the raw amino-acid sequence, 496 residues long: Probable E3 ubiquitin-protein ligase XBOS32 (496 aa).

ANK repeat units follow at residues 50–79 (GRNSPLHYAAAQGHHEIVSLLLESGVEINL), 83–112 (RGQTALMQACQYGHWEVVQTLMLFNANVHR), 117–147 (NGGSALHFAALHGHARCLRLVLADYVPSMPN), 180–209 (GGLTPLHMAALNGHVECVQLLLDLGASVIE), and 223–252 (AGSTPLHYAACGGNAVCCQLLIARGASLSA). Residues 321-368 (CAVCLEGSCSVAAEGCKHEFCTRCALYLCSTSYTSVSPAGAIPCPLCR) form an RING-type zinc finger.

The enzyme catalyses S-ubiquitinyl-[E2 ubiquitin-conjugating enzyme]-L-cysteine + [acceptor protein]-L-lysine = [E2 ubiquitin-conjugating enzyme]-L-cysteine + N(6)-ubiquitinyl-[acceptor protein]-L-lysine.. The protein operates within protein modification; protein ubiquitination. In Oryza sativa subsp. japonica (Rice), this protein is Probable E3 ubiquitin-protein ligase XBOS32 (XBOS32).